The chain runs to 70 residues: U-scutigerotoxin(02)-Tl1a (70 aa).

The signal sequence occupies residues 1-17 (MKYILLGLLLMVVLANA).

It belongs to the scutigerotoxin-02 family. Post-translationally, contains 4 disulfide bonds. Expressed by the venom gland.

Its subcellular location is the secreted. The protein is U-scutigerotoxin(02)-Tl1a of Thereuopoda longicornis (Long-legged centipede).